Here is a 379-residue protein sequence, read N- to C-terminus: UDP-4-amino-4-deoxy-L-arabinose--oxoglutarate aminotransferase (379 aa).

An N6-(pyridoxal phosphate)lysine modification is found at lysine 183.

It belongs to the DegT/DnrJ/EryC1 family. ArnB subfamily. Homodimer. It depends on pyridoxal 5'-phosphate as a cofactor.

It catalyses the reaction UDP-4-amino-4-deoxy-beta-L-arabinose + 2-oxoglutarate = UDP-beta-L-threo-pentopyranos-4-ulose + L-glutamate. It participates in nucleotide-sugar biosynthesis; UDP-4-deoxy-4-formamido-beta-L-arabinose biosynthesis; UDP-4-deoxy-4-formamido-beta-L-arabinose from UDP-alpha-D-glucuronate: step 2/3. The protein operates within bacterial outer membrane biogenesis; lipopolysaccharide biosynthesis. Catalyzes the conversion of UDP-4-keto-arabinose (UDP-Ara4O) to UDP-4-amino-4-deoxy-L-arabinose (UDP-L-Ara4N). The modified arabinose is attached to lipid A and is required for resistance to polymyxin and cationic antimicrobial peptides. This Pseudomonas fluorescens (strain ATCC BAA-477 / NRRL B-23932 / Pf-5) protein is UDP-4-amino-4-deoxy-L-arabinose--oxoglutarate aminotransferase.